Consider the following 403-residue polypeptide: S-adenosylmethionine synthase (403 aa).

Histidine 15 lines the ATP pocket. Residue aspartate 17 participates in Mg(2+) binding. Glutamate 43 provides a ligand contact to K(+). Residues glutamate 56 and glutamine 99 each contribute to the L-methionine site. Residues 99 to 109 (QSPDINQGVDR) are flexible loop. ATP-binding positions include 166–168 (DAK), 232–233 (KF), aspartate 241, 247–248 (RK), alanine 264, and lysine 268. Position 241 (aspartate 241) interacts with L-methionine. Lysine 272 is an L-methionine binding site.

The protein belongs to the AdoMet synthase family. Homotetramer; dimer of dimers. Mg(2+) serves as cofactor. Requires K(+) as cofactor.

The protein resides in the cytoplasm. The enzyme catalyses L-methionine + ATP + H2O = S-adenosyl-L-methionine + phosphate + diphosphate. The protein operates within amino-acid biosynthesis; S-adenosyl-L-methionine biosynthesis; S-adenosyl-L-methionine from L-methionine: step 1/1. Catalyzes the formation of S-adenosylmethionine (AdoMet) from methionine and ATP. The overall synthetic reaction is composed of two sequential steps, AdoMet formation and the subsequent tripolyphosphate hydrolysis which occurs prior to release of AdoMet from the enzyme. This is S-adenosylmethionine synthase from Xylella fastidiosa (strain Temecula1 / ATCC 700964).